The sequence spans 305 residues: MSSNDSNDTDKQHTRLDPTGVDDAYIPPEQPETKHHRFKISKDTLRNHFIAAAGEFCGTFMFLWCAYVICNVANHDVALVAAPDGSHPGQLIMIAIGFGFSVMFSIWCFAGVSGGALNPAMSLSLCLARAVSPTRCVVMWVSQIVAGMAAGGAASAMTPGEVLFANSLGLGCSRTRGLFLEMFGTAILCLTVLMTAVEKRETNFMAALPIGISLFIAHVALTAYTGTGVNPARSLGAAVAARYFPHYHWIYWIGTLLGSILAWSVWQLLQILDYTTYVTAEKAASTKEKAQKKGETSSSSAVAEV.

Residues 1 to 34 form a disordered region; the sequence is MSSNDSNDTDKQHTRLDPTGVDDAYIPPEQPETK. Over 1–48 the chain is Cytoplasmic; sequence MSSNDSNDTDKQHTRLDPTGVDDAYIPPEQPETKHHRFKISKDTLRNH. A helical membrane pass occupies residues 49 to 69; it reads FIAAAGEFCGTFMFLWCAYVI. Residues 70–91 lie on the Extracellular side of the membrane; that stretch reads CNVANHDVALVAAPDGSHPGQL. Residues 92–112 form a helical membrane-spanning segment; the sequence is IMIAIGFGFSVMFSIWCFAGV. Residues 113–136 are Cytoplasmic-facing; the sequence is SGGALNPAMSLSLCLARAVSPTRC. Residues 118 to 120 carry the NPA 1 motif; the sequence is NPA. The helical transmembrane segment at 137-157 threads the bilayer; that stretch reads VVMWVSQIVAGMAAGGAASAM. The Extracellular segment spans residues 158–176; that stretch reads TPGEVLFANSLGLGCSRTR. Residues 177–197 traverse the membrane as a helical segment; it reads GLFLEMFGTAILCLTVLMTAV. At 198–203 the chain is on the cytoplasmic side; it reads EKRETN. Residues 204-224 traverse the membrane as a helical segment; the sequence is FMAALPIGISLFIAHVALTAY. Residues 225–248 lie on the Extracellular side of the membrane; it reads TGTGVNPARSLGAAVAARYFPHYH. The NPA 2 signature appears at 230 to 232; sequence NPA. A helical transmembrane segment spans residues 249–269; sequence WIYWIGTLLGSILAWSVWQLL. Residues 270–305 lie on the Cytoplasmic side of the membrane; the sequence is QILDYTTYVTAEKAASTKEKAQKKGETSSSSAVAEV. Basic and acidic residues predominate over residues 286-295; that stretch reads TKEKAQKKGE. The tract at residues 286-305 is disordered; the sequence is TKEKAQKKGETSSSSAVAEV. Positions 296–305 are enriched in polar residues; that stretch reads TSSSSAVAEV.

It belongs to the MIP/aquaporin (TC 1.A.8) family.

The protein resides in the endoplasmic reticulum membrane. The protein localises to the cell membrane. In terms of biological role, water channel required to facilitate the transport of water across membranes. Involved in sporulation, freeze tolerance and osmotolerance. Is non-functional in most laboratory strains. In Saccharomyces cerevisiae (strain YJM789) (Baker's yeast), this protein is Aquaporin-1 (AQY1).